The sequence spans 314 residues: Vomeronasal type-1 receptor 98 (314 aa).

Residues 1 to 19 are Extracellular-facing; sequence MNKDTTMYCSAYIRDVFFC. A helical membrane pass occupies residues 20–40; that stretch reads EIGVGISANSCLLLFHIFMFI. Residues 41-49 are Cytoplasmic-facing; it reads RGHRPRLTD. The chain crosses the membrane as a helical span at residues 50-70; sequence LPIGLMALIHLLMLLLAAYIA. Topologically, residues 71–92 are extracellular; the sequence is KDFFMSSGWDDITCKLFIFLHR. Cys84 and Cys171 are joined by a disulfide. The chain crosses the membrane as a helical span at residues 93-113; it reads FFRSLSVCATCMLSVFQTIIL. Residues 114-133 are Cytoplasmic-facing; it reads CPQSSHLAKFKPNSPYHLSC. A helical transmembrane segment spans residues 134 to 154; that stretch reads FFIFMSIFYTSISSHILIAAI. Topologically, residues 155-186 are extracellular; sequence ATQNLTSVNLIYITKSCSFLPMSSSMQRTFST. A glycan (N-linked (GlcNAc...) asparagine) is linked at Asn158. Residues 187–207 traverse the membrane as a helical segment; sequence LLAFRNAFLIGLMGLSTCYMA. Residues 208–235 lie on the Cytoplasmic side of the membrane; the sequence is TLLCRHKTRSQRLQNSKLSPKATPEQRA. The chain crosses the membrane as a helical span at residues 236-256; the sequence is IWTLLMFMSFFLVMSTFDSII. The Extracellular portion of the chain corresponds to 257–268; that stretch reads SYSRTIFQGNPS. The helical transmembrane segment at 269-289 threads the bilayer; sequence LYCAQILVAHSYAVVSPMLVL. At 290–314 the chain is on the cytoplasmic side; the sequence is SNENRLTNPLISMYERIVRLDFLCW.

It belongs to the G-protein coupled receptor 1 family.

The protein resides in the cell membrane. Its function is as follows. Putative pheromone receptor implicated in the regulation of social as well as reproductive behavior. This is Vomeronasal type-1 receptor 98 (Vom1r98) from Rattus norvegicus (Rat).